A 1226-amino-acid polypeptide reads, in one-letter code: uncharacterized protein (1226 aa).

Belongs to the Mg-chelatase subunit H family.

This is an uncharacterized protein from Methanocaldococcus jannaschii (strain ATCC 43067 / DSM 2661 / JAL-1 / JCM 10045 / NBRC 100440) (Methanococcus jannaschii).